The primary structure comprises 513 residues: MDTESKNKKTTNGGENSNCSHSTRTPDKSIEERFYNWERRSRTTNRFGTTVNSRSYNMYFQGTHNTSRRHTYGNIHHRRRFSDNIRRCLRQLCMKRKTPAKKRSDKLVSRPSLPEHVFTLARIKNVTTFIFNVTSELHYSHIDLKEMPIYAGSGSYGVVKIFKKTDIAVKKVLECFKTELLMTLIAGECALRAKSTLRINNIIPLLAFSIPSKELVFPAYHMDMDSYYHRLARIDKTVQHWKAIEKTFMDLGKAVVFLNVSCGLTHLDIKCGNIFVNVTEGPNPILVDAVIGDFSLALLNTNSTILKSRFDVNISSDKIQSLKVCRGNIKPVFDLVLGHGQTQPCELMIKALNGVGFERRSTPLTSDEGVSIDMYALGQSLMEVILAAGMNFTHRFGISSNPLHFYYHRLMRADYLLDILAYRCMLYQHLFPMTPLTSKNGIPWERAEKIRLQLHSSRHRAEFDKYLEAYDITHRKLFDSLNIFPYLNNLLELAALYCHANPVARTADLLLWN.

Positions methionine 1–aspartate 27 are disordered. Polar residues predominate over residues threonine 10 to threonine 23. The 343-residue stretch at lysine 145–leucine 487 folds into the Protein kinase domain. Residues alanine 151–valine 159 and lysine 170 each bind ATP. Aspartate 268 serves as the catalytic Proton acceptor.

Belongs to the protein kinase superfamily. Ser/Thr protein kinase family. In terms of processing, autophosphorylated.

The protein resides in the virion tegument. It localises to the host nucleus. It carries out the reaction L-seryl-[protein] + ATP = O-phospho-L-seryl-[protein] + ADP + H(+). The catalysed reaction is L-threonyl-[protein] + ATP = O-phospho-L-threonyl-[protein] + ADP + H(+). Its function is as follows. Multifunctional serine/threonine kinase that plays a role in several processes including egress of virus particles from the nucleus, modulation of the actin cytoskeleton and regulation of viral and cellular gene expression. This Gallid herpesvirus 2 (strain Chicken/Md5/ATCC VR-987) (GaHV-2) protein is Serine/threonine-protein kinase UL13 homolog (MDV025).